The following is a 594-amino-acid chain: Segmentation polarity homeobox protein engrailed (594 aa).

Disordered stretches follow at residues 1 to 64 (MALE…TRDE), 76 to 127 (IKQE…PASI), 141 to 164 (KATA…ISPG), 198 to 217 (HYYQ…PQRA), 231 to 299 (ISKS…PTGS), 387 to 458 (AGTG…GSEN), and 474 to 501 (DRPS…RPRT). A compositionally biased stretch (low complexity) spans 22–60 (SQSPTSTTTVTMATASPVPACTTTTTTTSTSGASAASSP). Residues 92-112 (PHHHQHPHHHQLPHHPHHQHH) show a composition bias toward basic residues. A compositionally biased stretch (pro residues) spans 151-164 (HPQPPAIREPISPG). A compositionally biased stretch (polar residues) spans 237–247 (LCSSNGSSSAT). Composition is skewed to low complexity over residues 278 to 299 (ASPS…PTGS) and 387 to 402 (AGTG…ANGA). 2 stretches are compositionally biased toward polar residues: residues 426 to 436 (SSETNGSSSQD) and 448 to 458 (ETSSTKDGSEN). Over residues 487–499 (QPKEKGDSEEKRP) the composition is skewed to basic and acidic residues. The segment at residues 496 to 555 (EKRPRTAFSNAQLQRLKNEFNENRYLTEKRRQTLSAELGLNEAQIKIWFQNKRAKIKKSS) is a DNA-binding region (homeobox).

It belongs to the engrailed homeobox family.

Its subcellular location is the nucleus. Its function is as follows. This protein specifies the body segmentation pattern. It is required for the development of the central nervous system. Transcriptional regulator that repress activated promoters. In Anopheles gambiae (African malaria mosquito), this protein is Segmentation polarity homeobox protein engrailed (en).